An 818-amino-acid polypeptide reads, in one-letter code: Sodium/hydrogen exchanger 1 (818 aa).

The Extracellular portion of the chain corresponds to 1 to 98 (MLLWPGASGL…FPVLGIDYQH (98 aa)). The disordered stretch occupies residues 44–76 (STIRGSEPPRERSIGDVTTAPPELAPESRPVNH). A glycan (N-linked (GlcNAc...) asparagine) is linked at N75. The helical transmembrane segment at 99–121 (VRIPFEIALWILLACLMKIGFHV) threads the bilayer. Residues 122 to 130 (IPTISSIVP) are Cytoplasmic-facing. A helical membrane pass occupies residues 131–148 (ESCLLIVVGLLVGGLIKG). The Extracellular portion of the chain corresponds to 149 to 158 (VGETPPILQS). Residues 159–176 (EVFFLFLLPPIILDAGYF) traverse the membrane as a helical segment. Over 177-186 (LPLRQFTENL) the chain is Cytoplasmic. The helical transmembrane segment at 187–215 (GTILIFAVVGTLWNAFFLGGLMYAVCLVG) threads the bilayer. Residues 216-222 (GEQINNI) are Extracellular-facing. The chain crosses the membrane as a helical span at residues 223–249 (GLLENLLFGSIISAVDPVAVLAVFEEI). At 250-252 (HIN) the chain is on the cytoplasmic side. The helical transmembrane segment at 253–283 (ELLHILVFGESLLNDAVTVVLYHLFEEFANY) threads the bilayer. Residues 284–287 (DRVG) lie on the Extracellular side of the membrane. A helical membrane pass occupies residues 288 to 322 (IVDIILGFLSFFVVSLGGVFVGVVYGVIAAFTSRF). Over 323–328 (TSHIRV) the chain is Cytoplasmic. Residues 329 to 341 (IEPLFVFLYSYMA) form a helical membrane-spanning segment. At 342 to 350 (YLSAELFHL) the chain is on the extracellular side. Residues 351 to 371 (SGIMALIASGVVMRPYVEANI) traverse the membrane as a helical segment. The Cytoplasmic portion of the chain corresponds to 372-373 (SH). Residues 374 to 404 (KSHTTIKYFLKMWSSVSETLIFIFLGVSTVA) form a helical membrane-spanning segment. Over 405-410 (GSHHWN) the chain is Extracellular. Residues 411-438 (WTFVISTLLFCLIARVLGVLGLTWFINK) traverse the membrane as a helical segment. At 439–444 (FRIVKL) the chain is on the cytoplasmic side. Residues 445 to 469 (TPKDQFIIAYGGLRGAIAFSLGYLL) form a helical membrane-spanning segment. The Extracellular portion of the chain corresponds to 470 to 475 (DKKHFP). Residues 476 to 505 (MCDLFLTAIITVIFFTVFVQGMTIRPLVDL) form a helical membrane-spanning segment. The interaction with TESC stretch occupies residues 503 to 545 (VDLLAVKKKQETKRSINEEIHTQFLDHLLTGIEDICGHYGHHH). Topologically, residues 506-818 (LAVKKKQETK…EGEPFIPKGQ (313 aa)) are cytoplasmic. Residues 509 to 516 (KKKQETKR) are PI(4,5)P2-binding region. The interval 515–545 (KRSINEEIHTQFLDHLLTGIEDICGHYGHHH) is interaction with CHP2. The interval 540–545 (HYGHHH) is confers pH-dependent PI(4,5)P2 binding. A PI(4,5)P2-binding region region spans residues 552–560 (RFNKKYVKK). Phosphoserine occurs at positions 599 and 602. Position 603 is a phosphothreonine (T603). A phosphoserine mark is found at S605 and S648. The tract at residues 633–818 (KILRNNLQKT…EGEPFIPKGQ (186 aa)) is interaction with TESC. Positions 633–818 (KILRNNLQKT…EGEPFIPKGQ (186 aa)) are interaction with CALM1. An interaction with PPP3CA region spans residues 684-687 (LTVP). Phosphoserine is present on residues S693, S697, and S703. The tract at residues 715 to 720 (PVITID) is interaction with PPP3CA. Phosphoserine is present on residues S723, S726, and S729. Positions 741–818 (VLGLSRDPGR…EGEPFIPKGQ (78 aa)) are disordered. T782 bears the Phosphothreonine mark. The segment covering 785-794 (PSDSPSSQRI) has biased composition (polar residues). Phosphoserine is present on residues S788, S790, and S799.

This sequence belongs to the monovalent cation:proton antiporter 1 (CPA1) transporter (TC 2.A.36) family. Homodimer; dimerization is crucial for its function. Oligomer. Interacts with CALM in a calcium-dependent manner. Interacts with TESC. Interacts (via the juxtamembrane region of the cytoplasmic C-terminal domain) with CHP1; the interaction occurs at the plasma membrane in a calcium-dependent manner. Interacts with CHP2; the interaction occurs in a calcium-dependent manner. Interacts with EZR; regulates the cytoskeletal interactions of SLC9A1 and promotes stress fiber formation. Post-translationally, ubiquitinated, leading to its degradation by the proteasome. Ubiquitination is reduced by CHP1. O-glycosylated. In terms of processing, palmitoylated; may play a major role in SLC9A1 regulation. Post-translationally, phosphorylation at Thr-782 increases SLC9A1 activity. Specifically dephosphorylated at Thr-782 by PPP3CA that negatively regulates SLC9A1 activity. Phosphorylation at Ser-648 by AKT1 reduces SLC9A1 binding to CALM1.

The protein resides in the cell membrane. It localises to the basolateral cell membrane. It catalyses the reaction Na(+)(in) + H(+)(out) = Na(+)(out) + H(+)(in). It carries out the reaction Li(+)(out) + H(+)(in) = Li(+)(in) + H(+)(out). The enzyme catalyses Li(+)(in) + Na(+)(out) = Li(+)(out) + Na(+)(in). With respect to regulation, activated at acidic pHs. Inhibited by amiloride and 5-amino-substituted derivatives. Inhibited by cariporide and eniporide. Phosphatidylinositol 4,5-bisphosphate (PI(4,5)P2) and phosphatidylinositol 3,4,5-trisphosphate (PI(3,4,5)P3) bind and differentially regulate SLC9A1 activity. In terms of biological role, electroneutral Na(+) /H(+) antiporter that extrudes Na(+) in exchange for external protons driven by the inward sodium ion chemical gradient, protecting cells from acidification that occurs from metabolism. Exchanges intracellular H(+) ions for extracellular Na(+) in 1:1 stoichiometry. Plays a key role in maintening intracellular pH neutral and cell volume, and thus is important for cell growth, proliferation, migration and survival. In addition, can transport lithium Li(+) and also functions as a Na(+)/Li(+) antiporter. SLC9A1 also functions in membrane anchoring and organization of scaffolding complexes that coordinate signaling inputs. The chain is Sodium/hydrogen exchanger 1 (SLC9A1) from Bos taurus (Bovine).